The chain runs to 101 residues: MIGLADYLILGALLFSLGVAGIFINRKNLLVLLMCIELILLAVNMNFIAFSAYLQDLAGQVFVFFILTVAAAEAAIGLAIVVALFRNRGSINVGDLDSMKG.

Transmembrane regions (helical) follow at residues leucine 4–isoleucine 24, leucine 30–phenylalanine 50, and valine 61–valine 81.

It belongs to the complex I subunit 4L family. In terms of assembly, NDH-1 is composed of 14 different subunits. Subunits NuoA, H, J, K, L, M, N constitute the membrane sector of the complex.

It is found in the cell inner membrane. The enzyme catalyses a quinone + NADH + 5 H(+)(in) = a quinol + NAD(+) + 4 H(+)(out). Its function is as follows. NDH-1 shuttles electrons from NADH, via FMN and iron-sulfur (Fe-S) centers, to quinones in the respiratory chain. The immediate electron acceptor for the enzyme in this species is believed to be ubiquinone. Couples the redox reaction to proton translocation (for every two electrons transferred, four hydrogen ions are translocated across the cytoplasmic membrane), and thus conserves the redox energy in a proton gradient. This chain is NADH-quinone oxidoreductase subunit K, found in Alkalilimnicola ehrlichii (strain ATCC BAA-1101 / DSM 17681 / MLHE-1).